A 263-amino-acid chain; its full sequence is Hydroxyethylthiazole kinase (263 aa).

Methionine 41 is a substrate binding site. Positions 117 and 163 each coordinate ATP. Glycine 190 is a binding site for substrate.

It belongs to the Thz kinase family. Requires Mg(2+) as cofactor.

The enzyme catalyses 5-(2-hydroxyethyl)-4-methylthiazole + ATP = 4-methyl-5-(2-phosphooxyethyl)-thiazole + ADP + H(+). It participates in cofactor biosynthesis; thiamine diphosphate biosynthesis; 4-methyl-5-(2-phosphoethyl)-thiazole from 5-(2-hydroxyethyl)-4-methylthiazole: step 1/1. Its function is as follows. Catalyzes the phosphorylation of the hydroxyl group of 4-methyl-5-beta-hydroxyethylthiazole (THZ). This is Hydroxyethylthiazole kinase from Lactiplantibacillus plantarum (strain ATCC BAA-793 / NCIMB 8826 / WCFS1) (Lactobacillus plantarum).